We begin with the raw amino-acid sequence, 251 residues long: Probable transcriptional regulatory protein Franean1_5147 (251 aa).

It belongs to the TACO1 family.

The protein resides in the cytoplasm. This Parafrankia sp. (strain EAN1pec) protein is Probable transcriptional regulatory protein Franean1_5147.